The sequence spans 113 residues: Large ribosomal subunit protein uL22 (113 aa).

The protein belongs to the universal ribosomal protein uL22 family. In terms of assembly, part of the 50S ribosomal subunit.

Its function is as follows. This protein binds specifically to 23S rRNA; its binding is stimulated by other ribosomal proteins, e.g. L4, L17, and L20. It is important during the early stages of 50S assembly. It makes multiple contacts with different domains of the 23S rRNA in the assembled 50S subunit and ribosome. In terms of biological role, the globular domain of the protein is located near the polypeptide exit tunnel on the outside of the subunit, while an extended beta-hairpin is found that lines the wall of the exit tunnel in the center of the 70S ribosome. The chain is Large ribosomal subunit protein uL22 from Bacillus cereus (strain ATCC 10987 / NRS 248).